The sequence spans 276 residues: Large ribosomal subunit protein uL2 (276 aa).

Positions 224-258 (VAMNPVDHPHGGGEGRTGEGRVPVSPWGTPTKGYR) are disordered. Positions 230–242 (DHPHGGGEGRTGE) are enriched in basic and acidic residues.

The protein belongs to the universal ribosomal protein uL2 family. In terms of assembly, part of the 50S ribosomal subunit. Forms a bridge to the 30S subunit in the 70S ribosome.

In terms of biological role, one of the primary rRNA binding proteins. Required for association of the 30S and 50S subunits to form the 70S ribosome, for tRNA binding and peptide bond formation. It has been suggested to have peptidyltransferase activity; this is somewhat controversial. Makes several contacts with the 16S rRNA in the 70S ribosome. This is Large ribosomal subunit protein uL2 from Polynucleobacter necessarius subsp. necessarius (strain STIR1).